The chain runs to 255 residues: Sorbose reductase sou1 (255 aa).

The NADP(+) site is built by Ile-21 and Asn-95. Residues Ser-148 and Tyr-163 each act as proton donor in the active site. Positions 163, 167, 195, and 197 each coordinate NADP(+). The active-site Lowers pKa of active site Tyr is the Lys-167.

The protein belongs to the short-chain dehydrogenases/reductases (SDR) family.

The enzyme catalyses D-sorbitol + NADP(+) = keto-L-sorbose + NADPH + H(+). In terms of biological role, catalyzes the NADP dependent reduction of L-sorbose to D-glucitol. The polypeptide is Sorbose reductase sou1 (sou1) (Schizosaccharomyces pombe (strain 972 / ATCC 24843) (Fission yeast)).